Reading from the N-terminus, the 611-residue chain is Urease subunit alpha 2 (611 aa).

One can recognise a Urease domain in the interval 154–611 (GGIDSHIHFI…LPMAQRYFLF (458 aa)). Ni(2+) contacts are provided by His-159, His-161, and Lys-242. Lys-242 is subject to N6-carboxylysine. Position 244 (His-244) interacts with substrate. The Ni(2+) site is built by His-271 and His-297. Residue His-345 is the Proton donor of the active site. Asp-385 is a Ni(2+) binding site. The disordered stretch occupies residues 411 to 434 (GHLAPDQSAKTEQSLDNIMLSPTD). Positions 418–434 (SAKTEQSLDNIMLSPTD) are enriched in polar residues.

The protein belongs to the metallo-dependent hydrolases superfamily. Urease alpha subunit family. In terms of assembly, heterotrimer of UreA (gamma), UreB (beta) and UreC (alpha) subunits. Three heterotrimers associate to form the active enzyme. Ni cation is required as a cofactor. In terms of processing, carboxylation allows a single lysine to coordinate two nickel ions.

The protein localises to the cytoplasm. The catalysed reaction is urea + 2 H2O + H(+) = hydrogencarbonate + 2 NH4(+). It functions in the pathway nitrogen metabolism; urea degradation; CO(2) and NH(3) from urea (urease route): step 1/1. This Psychrobacter cryohalolentis (strain ATCC BAA-1226 / DSM 17306 / VKM B-2378 / K5) protein is Urease subunit alpha 2.